Consider the following 109-residue polypeptide: SFAGILSDADIDAALAACQAAESFKHKEFFAKVGLSAKTPDVIKKAFYVIDQDKSGFIEEDELKLFLQNFASSARALTDKETETFLKAGDSDGDGKIGIDEFADLVKEA.

Ser-1 is subject to N-acetylserine. EF-hand domains follow at residues 38-73 (KTPD…FASS) and 77-109 (LTDK…VKEA). 11 residues coordinate Ca(2+): Asp-51, Asp-53, Ser-55, Phe-57, Glu-59, Glu-62, Asp-90, Asp-92, Asp-94, Lys-96, and Glu-101.

It belongs to the parvalbumin family.

Its function is as follows. In muscle, parvalbumin is thought to be involved in relaxation after contraction. It binds two calcium ions. The polypeptide is Parvalbumin beta (Opsanus tau (Oyster toadfish)).